The following is a 211-amino-acid chain: Suppressor of cytokine signaling 1 (211 aa).

A disordered region spans residues 1–53 (MVAHNQVAADNAVSTAAEPRRRPEPSSSSSSSPAAPARPRPCPAVPAPAPGDT). Positions 25-35 (PSSSSSSSPAA) are enriched in low complexity. Pro residues predominate over residues 36-49 (PARPRPCPAVPAPA). The tract at residues 55 to 66 (FRTFRSHADYRR) is kinase inhibitory region (KIR). An extended SH2 subdomain (ESS) region spans residues 67–78 (ITRASALLDACG). The 96-residue stretch at 79–174 (FYWGPLSVHG…PLRQRRVRPL (96 aa)) folds into the SH2 domain. Residues 161–210 (MLGAPLRQRRVRPLQELCRQRIVATVGRENLARIPLNPVLRDYLSSFPFQ) form the SOCS box domain. The tract at residues 173–182 (PLQELCRQRI) is interaction with Elongin BC complex.

This sequence belongs to the SOCS1 family. As to quaternary structure, interacts with multiple activated signaling proteins of the tyrosine kinase signaling pathway including JAK family kinases, TEC, KIT, GRB2 and VAV. Binding to JAKs is mediated through the KIR and SH2 domains to a phosphorylated tyrosine residue within the JAK JH1 domain. Binds the SH3 domain of GRB2 via diproline determinants in the N-terminus, and the N-terminal regulatory domain of VAV. Interacts with the Elongin BC complex (ELOB and ELOC). Component of an ECS CBC(SOCS1) E3 ubiquitin-protein ligase complex which contains Elongin BC, CUL5, RBX1 and SOCS1. Interacts (via SH2 domain and SOCS box) with TRIM8. Interacts with AXL, CUL2 and FGFR3. Interacts with INSR. Interacts with TRIM8. Interacts with DCUN1D1. Interacts with IFNGR1. In terms of tissue distribution, expressed in all tissues with high expression in spleen, small intestine and peripheral blood leukocytes.

It is found in the nucleus. The protein resides in the cytoplasmic vesicle. It participates in protein modification; protein ubiquitination. Essential negative regulator of type I and type II interferon (IFN) signaling, as well as that of other cytokines, including IL2, IL4, IL6 and leukemia inhibitory factor (LIF). Downregulates cytokine signaling by inhibiting the JAK/STAT signaling pathway. Acts by binding to JAK proteins and to IFNGR1 and inhibiting their kinase activity. In vitro, suppresses Tec protein-tyrosine activity. Regulates IFN-gamma (IFNG)-mediated sensory neuron survival. Probable substrate recognition component of an ECS (Elongin BC-CUL2/5-SOCS-box protein) E3 ubiquitin ligase complex which mediates the ubiquitination and subsequent proteasomal degradation of target proteins. The chain is Suppressor of cytokine signaling 1 (SOCS1) from Homo sapiens (Human).